Consider the following 179-residue polypeptide: Replication restart protein DnaT (179 aa).

Residues glycine 156–glycine 179 form a disordered region.

This sequence belongs to the DnaT family. Homooligomerizes. Interacts with PriB. Component of the replication restart primosome. Primosome assembly occurs via a 'hand-off' mechanism. PriA binds to replication forks, subsequently PriB then DnaT bind; DnaT then displaces ssDNA to generate the helicase loading substrate.

In terms of biological role, involved in the restart of stalled replication forks, which reloads the replicative helicase on sites other than the origin of replication. Can function in multiple replication restart pathways. Displaces ssDNA from a PriB-ssDNA complex. Probably forms a spiral filament on ssDNA. This Escherichia coli O17:K52:H18 (strain UMN026 / ExPEC) protein is Replication restart protein DnaT.